A 359-amino-acid chain; its full sequence is DNA polymerase IV (359 aa).

The 182-residue stretch at 7-188 (IIHIDMDAFY…LPIGKFFGVG (182 aa)) folds into the UmuC domain. Asp11 and Asp106 together coordinate Mg(2+). Glu107 is a catalytic residue.

Belongs to the DNA polymerase type-Y family. As to quaternary structure, monomer. Mg(2+) is required as a cofactor.

It localises to the cytoplasm. It carries out the reaction DNA(n) + a 2'-deoxyribonucleoside 5'-triphosphate = DNA(n+1) + diphosphate. In terms of biological role, poorly processive, error-prone DNA polymerase involved in untargeted mutagenesis. Copies undamaged DNA at stalled replication forks, which arise in vivo from mismatched or misaligned primer ends. These misaligned primers can be extended by PolIV. Exhibits no 3'-5' exonuclease (proofreading) activity. May be involved in translesional synthesis, in conjunction with the beta clamp from PolIII. This Clostridium perfringens (strain 13 / Type A) protein is DNA polymerase IV.